Reading from the N-terminus, the 229-residue chain is Urease accessory protein UreF (229 aa).

The protein belongs to the UreF family. UreD, UreF and UreG form a complex that acts as a GTP-hydrolysis-dependent molecular chaperone, activating the urease apoprotein by helping to assemble the nickel containing metallocenter of UreC. The UreE protein probably delivers the nickel.

Its subcellular location is the cytoplasm. In terms of biological role, required for maturation of urease via the functional incorporation of the urease nickel metallocenter. The sequence is that of Urease accessory protein UreF from Staphylococcus aureus (strain USA300).